Here is a 119-residue protein sequence, read N- to C-terminus: Large ribosomal subunit protein bL20 (119 aa).

The protein belongs to the bacterial ribosomal protein bL20 family.

Its function is as follows. Binds directly to 23S ribosomal RNA and is necessary for the in vitro assembly process of the 50S ribosomal subunit. It is not involved in the protein synthesizing functions of that subunit. The chain is Large ribosomal subunit protein bL20 from Herminiimonas arsenicoxydans.